We begin with the raw amino-acid sequence, 147 residues long: Small ribosomal subunit protein uS12 (147 aa).

It belongs to the universal ribosomal protein uS12 family. In terms of assembly, part of the 30S ribosomal subunit.

In terms of biological role, with S4 and S5 plays an important role in translational accuracy. Located at the interface of the 30S and 50S subunits. This is Small ribosomal subunit protein uS12 from Ignicoccus hospitalis (strain KIN4/I / DSM 18386 / JCM 14125).